Here is a 339-residue protein sequence, read N- to C-terminus: Protein RecA (339 aa).

66–73 (GPESSGKT) is an ATP binding site.

It belongs to the RecA family.

It is found in the cytoplasm. Its function is as follows. Can catalyze the hydrolysis of ATP in the presence of single-stranded DNA, the ATP-dependent uptake of single-stranded DNA by duplex DNA, and the ATP-dependent hybridization of homologous single-stranded DNAs. It interacts with LexA causing its activation and leading to its autocatalytic cleavage. This Geobacter metallireducens (strain ATCC 53774 / DSM 7210 / GS-15) protein is Protein RecA.